Reading from the N-terminus, the 604-residue chain is Putative ankyrin repeat protein L56 (604 aa).

ANK repeat units lie at residues 77–106 (IDRYCILLSCKFGFVELLEYLDEIGVDILV), 135–164 (FFKSSIHYAVKYGHMNIIEYLSCKKTNADG), 166–189 (LSACSLKNIQLVKYFLDQQNYDDN), 190–219 (TIYHGLRSACWNGDLEMVKYFMQYIPEDKR), 221–247 (NVFILDHVCEEGYFDILVYLIEQKWKI), 248–277 (DVEFAIKQTVMGGRLEMLKYLIAQYPDSKY), 314–341 (KFSKLLEVVCERGYLKVFKILFHLNENV), 342–371 (DLREAFSNACQNGHLDIVQYIISNKKEFTD), 380–410 (EHITYLTRITFAKGHLDILKCLDEIGISRSY), 445–474 (YSQAIAVKAFRYDTVSVIKYLVSVGLDIKP), 475–504 (ITNIALDYICINNNMDCLKYLIENGTDITI), 505–534 (NDNRAIKLAAQEDNIDIVKCLVENGADIRT), and 535–565 (DDDYVMKICTLRNHKVLIRYLMSLDIKEPSN).

The polypeptide is Putative ankyrin repeat protein L56 (Acanthamoeba polyphaga (Amoeba)).